We begin with the raw amino-acid sequence, 431 residues long: Leucine carboxyl methyltransferase 1 (431 aa).

S-adenosyl-L-methionine is bound by residues R103, G131, D159, and 219–220 (DL). Positions 228-268 (QPQQPLPPGVPIGSRGLHASPFTPGSTTQHEEQTEETSLPQ) are disordered. E289 contributes to the S-adenosyl-L-methionine binding site.

Belongs to the methyltransferase superfamily. LCMT family.

It catalyses the reaction [phosphatase 2A protein]-C-terminal L-leucine + S-adenosyl-L-methionine = [phosphatase 2A protein]-C-terminal L-leucine methyl ester + S-adenosyl-L-homocysteine. In terms of biological role, methylates the carboxyl group of the C-terminal leucine residue of protein phosphatase 2A catalytic subunits to form alpha-leucine ester residues. In Neurospora crassa (strain ATCC 24698 / 74-OR23-1A / CBS 708.71 / DSM 1257 / FGSC 987), this protein is Leucine carboxyl methyltransferase 1 (ppm-1).